The primary structure comprises 228 residues: Heptaprenylglyceryl phosphate synthase (228 aa).

Sn-glycerol 1-phosphate is bound at residue Lys-12. Mg(2+)-binding residues include Asp-14 and Ser-40. Sn-glycerol 1-phosphate is bound by residues 158–163 (YLEYSG), Gly-188, and 208–209 (GN).

Belongs to the GGGP/HepGP synthase family. Group I subfamily. In terms of assembly, homodimer. Mg(2+) is required as a cofactor.

The enzyme catalyses sn-glycerol 1-phosphate + all-trans-heptaprenyl diphosphate = 3-heptaprenyl-sn-glycero-1-phosphate + diphosphate. The protein operates within membrane lipid metabolism; glycerophospholipid metabolism. In terms of biological role, prenyltransferase that catalyzes in vivo the transfer of the heptaprenyl moiety of heptaprenyl pyrophosphate (HepPP; 35 carbon atoms) to the C3 hydroxyl of sn-glycerol-1-phosphate (G1P), producing heptaprenylglyceryl phosphate (HepGP). This reaction is an ether-bond-formation step in the biosynthesis of archaea-type G1P-based membrane lipids found in Bacillales. To a much lesser extent, is also able to use geranyl diphosphate (GPP; C10) and geranylgeranyl diphosphate (GGPP; C20) as the prenyl donors, but not farnesyl pyrophosphate (FPP; C15). Cannot use glycerol-3-phosphate (G3P) or 3-phosphoglycerate (3PG) as an acceptor. The sequence is that of Heptaprenylglyceryl phosphate synthase from Bacillus subtilis (strain 168).